The chain runs to 312 residues: tRNA pseudouridine synthase B (312 aa).

Asp-38 functions as the Nucleophile in the catalytic mechanism.

This sequence belongs to the pseudouridine synthase TruB family. Type 1 subfamily.

It carries out the reaction uridine(55) in tRNA = pseudouridine(55) in tRNA. Functionally, responsible for synthesis of pseudouridine from uracil-55 in the psi GC loop of transfer RNAs. In Syntrophus aciditrophicus (strain SB), this protein is tRNA pseudouridine synthase B.